The primary structure comprises 73 residues: Beta-defensin 108B (73 aa).

The N-terminal stretch at 1-22 is a signal peptide; that stretch reads MRIAVLLFAIFFFMSQVLPARG. Cystine bridges form between Cys-28-Cys-55, Cys-35-Cys-49, and Cys-39-Cys-56.

Belongs to the beta-defensin family. Specifically expressed in testis. Low expression is detected also in liver.

It is found in the secreted. Functionally, has antibacterial activity. The polypeptide is Beta-defensin 108B (DEFB108B) (Homo sapiens (Human)).